Consider the following 327-residue polypeptide: MSQLTEIVEQALAAIEGTEDLKALDELRVDYLGKKGKITDMMKMMGKLSPAEKPAFGQAVNQAKQAVQKQLSERIDNLKAKELEAQLVAESIDVSLPGRRIDNGGLHPVTRTIERIETFFGELGFSVKEGPEIEDDFHNFDALNISEHHPARADHDTFYFNPKVMLRTQTSGVQIRTMENEKPPLRIISPGRVYRNDYDQTHTPMFHQVEGLLVAENVNFAELKGILHDFLRNFFEEDLEVRFRPSYFPFTEPSAEVDVMGKNGKWLEVLGCGMVHPNVLRSVGIDPEKYSGFAFGMGVERLSMLRYGVNDLRSFFENDLRFLKQFK.

Residue glutamate 252 coordinates Mg(2+).

Belongs to the class-II aminoacyl-tRNA synthetase family. Phe-tRNA synthetase alpha subunit type 1 subfamily. As to quaternary structure, tetramer of two alpha and two beta subunits. It depends on Mg(2+) as a cofactor.

The protein localises to the cytoplasm. It carries out the reaction tRNA(Phe) + L-phenylalanine + ATP = L-phenylalanyl-tRNA(Phe) + AMP + diphosphate + H(+). The chain is Phenylalanine--tRNA ligase alpha subunit from Shewanella sediminis (strain HAW-EB3).